Reading from the N-terminus, the 380-residue chain is MKDCEYQQISPGAAPPPASPGARRPGPAAPPAPSPGPAPGAPRWSGSGSGSGSLGRRPRRKWEVFPGRNRFYCGGRLMLAGHGGVFALTLLLILSTTILFFVFDCPYLARTLTLAIPIIAAILFFFVMSCLLQTSFTDPGILPRATICEAAALEKQIDNTGSSTYRPPPRTREVMINGQTVKLKYCFTCKMFRPPRTSHCSVCDNCVERFDHHCPWVGNCVGRRNYRFFYAFILSLSFLTAFIFACVVTHLTLLSQGSNFLSALKKTPASVLELVICFFSIWSILGLSGFHTYLVASNLTTNEDIKGSWSSKRGGEASVNPYSHKSIITNCCAVLCGPLPPSLIDRRGFVQSDTALPSPIRSDDPACGAKPDASMVGGHP.

A disordered region spans residues Met-1–Arg-59. Topologically, residues Met-1–His-82 are cytoplasmic. Ser-19 carries the phosphoserine modification. Residues Pro-27 to Gly-40 show a composition bias toward pro residues. A helical transmembrane segment spans residues Gly-83–Phe-103. Topologically, residues Asp-104 to Thr-111 are lumenal. Residues Leu-112–Leu-132 traverse the membrane as a helical segment. At Gln-133–Arg-227 the chain is on the cytoplasmic side. The DHHC domain occupies Lys-184–Leu-234. The active-site S-palmitoyl cysteine intermediate is the Cys-214. The chain crosses the membrane as a helical span at residues Phe-228–Val-248. The Lumenal portion of the chain corresponds to Thr-249 to Ala-269. The helical transmembrane segment at Ser-270–Phe-290 threads the bilayer. At His-291 to Pro-380 the chain is on the cytoplasmic side. The disordered stretch occupies residues Ala-355 to Pro-380.

Belongs to the DHHC palmitoyltransferase family. ERF2/ZDHHC9 subfamily. In terms of tissue distribution, ubiquitously expressed.

Its subcellular location is the golgi apparatus membrane. It carries out the reaction L-cysteinyl-[protein] + hexadecanoyl-CoA = S-hexadecanoyl-L-cysteinyl-[protein] + CoA. Its function is as follows. Palmitoyltransferase that catalyzes the addition of palmitate onto various protein substrates, such as CGAS, HRAS and LCK. Palmitoylates HRAS and LCK. Acts as a negative regulator of the cGAS-STING pathway be mediating palmitoylation and inactivation of CGAS. May also have a palmitoyltransferase activity toward the beta-2 adrenergic receptor/ADRB2 and therefore regulate G protein-coupled receptor signaling. The sequence is that of Palmitoyltransferase ZDHHC18 from Mus musculus (Mouse).